The following is a 172-amino-acid chain: Type IV secretion system putative outer membrane lipoprotein BRA0058/BS1330_II0058 (172 aa).

An N-terminal signal peptide occupies residues 1–15 (MRTLVMVACAVSLAA). Cysteine 16 is lipidated: N-palmitoyl cysteine. A lipid anchor (S-diacylglycerol cysteine) is attached at cysteine 16. The 115-residue stretch at 58–172 (WPARPPKQTV…RRVDIEILRK (115 aa)) folds into the OmpA-like domain.

It is found in the cell outer membrane. Functionally, the VirB system could be required for the establishment of the replication niche in the host. In Brucella suis biovar 1 (strain 1330), this protein is Type IV secretion system putative outer membrane lipoprotein BRA0058/BS1330_II0058.